A 509-amino-acid chain; its full sequence is Histidine--tRNA ligase (509 aa).

This sequence belongs to the class-II aminoacyl-tRNA synthetase family. In terms of assembly, homodimer.

It localises to the cytoplasm. It catalyses the reaction tRNA(His) + L-histidine + ATP = L-histidyl-tRNA(His) + AMP + diphosphate + H(+). This chain is Histidine--tRNA ligase, found in Rhodopseudomonas palustris (strain TIE-1).